The chain runs to 439 residues: Mitochondrial distribution and morphology protein 10 (439 aa).

The disordered stretch occupies residues 275–305; it reads LPDATPPSFQVPSSSSSSSNPVSPSTSQPPT. Residues 280–305 are compositionally biased toward low complexity; the sequence is PPSFQVPSSSSSSSNPVSPSTSQPPT.

It belongs to the MDM10 family. As to quaternary structure, component of the ER-mitochondria encounter structure (ERMES) or MDM complex, composed of MMM1, MDM10, MDM12 and MDM34. Associates with the mitochondrial outer membrane sorting assembly machinery SAM(core) complex.

It is found in the mitochondrion outer membrane. Component of the ERMES/MDM complex, which serves as a molecular tether to connect the endoplasmic reticulum and mitochondria. Components of this complex are involved in the control of mitochondrial shape and protein biogenesis and may function in phospholipid exchange. MDM10 is involved in the late assembly steps of the general translocase of the mitochondrial outer membrane (TOM complex). Functions in the TOM40-specific route of the assembly of outer membrane beta-barrel proteins, including the association of TOM40 with the receptor TOM22 and small TOM proteins. Can associate with the SAM(core) complex as well as the MDM12-MMM1 complex, both involved in late steps of the major beta-barrel assembly pathway, that is responsible for biogenesis of all outer membrane beta-barrel proteins. May act as a switch that shuttles between both complexes and channels precursor proteins into the TOM40-specific pathway. Plays a role in mitochondrial morphology and in the inheritance of mitochondria. This chain is Mitochondrial distribution and morphology protein 10, found in Laccaria bicolor (strain S238N-H82 / ATCC MYA-4686) (Bicoloured deceiver).